A 351-amino-acid polypeptide reads, in one-letter code: Nuclear inhibitor of protein phosphatase 1 (351 aa).

An interaction with CDC5L, SF3B1 and MELK region spans residues 1 to 142 (MAAAVNSGSS…LPSAVKGDEK (142 aa)). The 53-residue stretch at 49–101 (YLFGRNPDLCDFTIDHQSCSRVHAALVYHKHLKRVFLIDLNSTHGTFLGHIRL) folds into the FHA domain. Residues 143-224 (MGGEDDELKG…VDPSVGRFRN (82 aa)) are interaction with EED. Threonine 161 is modified (phosphothreonine). Residues serine 178 and serine 199 each carry the phosphoserine modification. 2 short sequence motifs (nuclear localization signal) span residues 185 to 209 (GNLD…DDEI) and 210 to 240 (INPE…RMEG). Residues 191–200 (RPKRKRKNSR) are involved in PP-1 inhibition. The interval 200 to 203 (RVTF) is involved in PP-1 binding. The residue at position 204 (serine 204) is a Phosphoserine. Serine 249 is subject to Phosphoserine. The residue at position 264 (tyrosine 264) is a Phosphotyrosine. Positions 310 to 329 (AVAINPTPNPAVYNPEAVNE) are interaction with EED. Residues 314–351 (NPTPNPAVYNPEAVNEPKKKKYAKEAWPGKKPTPSLLI) are disordered. The interval 330–351 (PKKKKYAKEAWPGKKPTPSLLI) is RNA-binding. Positions 331–337 (KKKKYAK) are involved in PP-1 inhibition. Tyrosine 335 carries the post-translational modification Phosphotyrosine.

Interacts with phosphorylated CDC5L, SF3B1 and MELK. Part of the spliceosome. Interacts with PPP1CA, PPP1CB and PPP1CC. Interacts with EED. Part of a complex consisting of PPP1R8, EED, HDAC2 and PP-1. Post-translationally, may be inactivated by phosphorylation on Ser-199 or Ser-204.

The protein localises to the nucleus. Its subcellular location is the nucleus speckle. In terms of biological role, inhibitor subunit of the major nuclear protein phosphatase-1 (PP-1). It has RNA-binding activity but does not cleave RNA and may target PP-1 to RNA-associated substrates. May also be involved in pre-mRNA splicing. Binds DNA and might act as a transcriptional repressor. Essential for cell proliferation and early embryonic development. The sequence is that of Nuclear inhibitor of protein phosphatase 1 (Ppp1r8) from Mus musculus (Mouse).